The chain runs to 61 residues: Large ribosomal subunit protein uL30 (61 aa).

Belongs to the universal ribosomal protein uL30 family. In terms of assembly, part of the 50S ribosomal subunit.

This chain is Large ribosomal subunit protein uL30, found in Corynebacterium aurimucosum (strain ATCC 700975 / DSM 44827 / CIP 107346 / CN-1) (Corynebacterium nigricans).